The sequence spans 749 residues: Phosphate-regulating neutral endopeptidase PHEX (749 aa).

Residues 1-20 lie on the Cytoplasmic side of the membrane; sequence MEAETGSTMETGKGTNRGIR. The helical; Signal-anchor for type II membrane protein transmembrane segment at 21-37 threads the bilayer; the sequence is IALALFIGGTLVLGTLL. At 38 to 749 the chain is on the extracellular side; it reads FLVSQGLLSF…NRGADSCRLW (712 aa). Positions 53–749 constitute a Peptidase M13 domain; the sequence is YCLKPECIEA…NRGADSCRLW (697 aa). A disulfide bridge connects residues Cys-54 and Cys-59. N-linked (GlcNAc...) asparagine glycosylation is found at Asn-71, Asn-238, Asn-263, Asn-290, Asn-301, Asn-377, and Asn-484. Intrachain disulfides connect Cys-77-Cys-733, Cys-85-Cys-693, Cys-142-Cys-406, and Cys-617-Cys-746. A Zn(2+)-binding site is contributed by His-580. Glu-581 is an active-site residue. Zn(2+) contacts are provided by His-584 and Glu-642. The active-site Proton donor is the Asp-646. Asn-736 is a glycosylation site (N-linked (GlcNAc...) asparagine).

This sequence belongs to the peptidase M13 family. As to quaternary structure, interacts with MEPE; the interaction is zinc-dependent (via ASARM motif). Zn(2+) is required as a cofactor. N-glycosylated. Expressed in bone, specifically in the osteoid and in osteocytes. Expressed in teeth, specifically in odontoblasts and ameloblasts. Expressed moderately by macrophages in the liver and has minimal expression in brown adipose tissue. Also expressed in suprabasal layers of the skin.

It localises to the cell membrane. Peptidase that cleaves SIBLING (small integrin-binding ligand, N-linked glycoprotein)-derived ASARM peptides, thus regulating their biological activity. Cleaves ASARM peptides between Ser and Glu or Asp residues. Regulates osteogenic cell differentiation and bone mineralization through the cleavage of the MEPE-derived ASARM peptide. Promotes dentin mineralization and renal phosphate reabsorption by cleaving DMP1- and MEPE-derived ASARM peptides. Inhibits the cleavage of MEPE by CTSB/cathepsin B thus preventing MEPE degradation. The polypeptide is Phosphate-regulating neutral endopeptidase PHEX (Phex) (Mus musculus (Mouse)).